We begin with the raw amino-acid sequence, 361 residues long: Glutamate 5-kinase (361 aa).

Lys-14 contacts ATP. Residues Ser-54, Asp-141, and Asn-153 each coordinate substrate. The PUA domain maps to 277–355 (KGAVIINQGA…KGLKPVIHYD (79 aa)).

This sequence belongs to the glutamate 5-kinase family.

The protein localises to the cytoplasm. The enzyme catalyses L-glutamate + ATP = L-glutamyl 5-phosphate + ADP. It functions in the pathway amino-acid biosynthesis; L-proline biosynthesis; L-glutamate 5-semialdehyde from L-glutamate: step 1/2. Catalyzes the transfer of a phosphate group to glutamate to form L-glutamate 5-phosphate. This chain is Glutamate 5-kinase, found in Chlorobaculum tepidum (strain ATCC 49652 / DSM 12025 / NBRC 103806 / TLS) (Chlorobium tepidum).